The sequence spans 814 residues: Protein kinase C-binding protein NELL2 (814 aa).

Positions 1–19 (MEFILGIFCVIFCLRAGAG) are cleaved as a signal peptide. N-linked (GlcNAc...) asparagine glycans are attached at residues Asn-51, Asn-223, and Asn-296. Positions 53-226 (SKAFLFQDTS…SQCPDLNRTC (174 aa)) constitute a Laminin G-like domain. The VWFC 1 domain maps to 270–329 (RSCTVKGNIYRELESWMDGCKKCTCTNGTAQCETLTCSVPNCLSGFAPAYVPGKCCKECQ). An EGF-like 1 domain is found at 395–437 (GHDFCSEGHNCVEYSICKNLNDKAVCICRDGFRALREDSAYCE). Disulfide bonds link Cys-399–Cys-411, Cys-405–Cys-420, and Cys-422–Cys-436. Ca(2+)-binding residues include Asp-438, Ile-439, and Glu-441. In terms of domain architecture, EGF-like 2; calcium-binding spans 438 to 479 (DIDECTEGRHYCRENTVCVNTPGSFMCVCQTGYLKIDDYSCT). 9 disulfide bridges follow: Cys-442/Cys-455, Cys-449/Cys-464, Cys-466/Cys-478, Cys-484/Cys-497, Cys-491/Cys-506, Cys-508/Cys-519, Cys-523/Cys-533, Cys-527/Cys-539, and Cys-541/Cys-550. Ca(2+) contacts are provided by Asn-457, Thr-458, and Ser-461. The EGF-like 3; calcium-binding domain occupies 480 to 520 (EHNECATNQHSCDENAVCYNTVGGHNCVCQPGYTGNGTVCK). N-linked (GlcNAc...) asparagine glycosylation is present at Asn-515. The EGF-like 4 domain maps to 521–551 (AFCTDGCRNGGTCIAPNICACPQGFTGPSCE). 3 residues coordinate Ca(2+): Asp-553, Ile-554, and Glu-556. Residues 553 to 599 (DIDECTEGFVQCDSRANCINLPGWYHCECRDGYHDNGMFSLSGESCE) enclose the EGF-like 5; calcium-binding domain. Intrachain disulfides connect Cys-557/Cys-570, Cys-564/Cys-579, and Cys-581/Cys-598. Positions 572, 573, and 576 each coordinate Ca(2+). Residues Asp-600, Ile-601, and Glu-603 each coordinate Ca(2+). The EGF-like 6; calcium-binding domain occupies 600–635 (DIDECATGRHSCSNDTVCFNLDGGFDCRCPHGKNCS). Intrachain disulfides connect Cys-604–Cys-617, Cys-611–Cys-626, and Cys-628–Cys-634. N-linked (GlcNAc...) asparagine glycosylation occurs at Asn-613. 3 residues coordinate Ca(2+): Asn-619, Leu-620, and Gly-623. Asn-633 carries an N-linked (GlcNAc...) asparagine glycan. VWFC domains lie at 636–691 (GDCT…PECD) and 696–754 (SQCL…PRCI).

As to quaternary structure, homotrimer.

The protein resides in the secreted. May regulate neuronal differentiation, polarization and axon guidance. The protein is Protein kinase C-binding protein NELL2 (nell2) of Xenopus tropicalis (Western clawed frog).